Here is a 363-residue protein sequence, read N- to C-terminus: Transcription factor PIF6 (363 aa).

Disordered regions lie at residues 154-204 and 340-363; these read SEGS…RNDI and IPNP…KTNR. Over residues 178–188 the composition is skewed to basic residues; it reads RTRKALVKRKR. A bHLH domain is found at 188–237; it reads RNAEAYNSPERNQRNDINKKMRTLQNLLPNSHKDDNESMLDEAINYMTNL. Residues 340–350 show a composition bias toward polar residues; sequence IPNPNSLSNLD. The span at 354–363 shows a compositional bias: basic residues; it reads LHKKSRKTNR.

In terms of assembly, homodimer. Interacts with APRR1/TOC1. Binds to RGL2 and RGA. Associates to PTAC12/HMR/PAP5 which acts as a transcriptional coactivator. As to expression, mainly expressed in fruits and flowers and, to a lower extent, in leaves, stems, seedlings and roots.

Its subcellular location is the nucleus. Its function is as follows. Transcription factor. This Arabidopsis thaliana (Mouse-ear cress) protein is Transcription factor PIF6.